Reading from the N-terminus, the 208-residue chain is Small ribosomal subunit protein uS4 (208 aa).

The region spanning R98–F161 is the S4 RNA-binding domain.

This sequence belongs to the universal ribosomal protein uS4 family. In terms of assembly, part of the 30S ribosomal subunit. Contacts protein S5. The interaction surface between S4 and S5 is involved in control of translational fidelity.

In terms of biological role, one of the primary rRNA binding proteins, it binds directly to 16S rRNA where it nucleates assembly of the body of the 30S subunit. Functionally, with S5 and S12 plays an important role in translational accuracy. This Halothermothrix orenii (strain H 168 / OCM 544 / DSM 9562) protein is Small ribosomal subunit protein uS4.